Here is a 171-residue protein sequence, read N- to C-terminus: Sec-independent protein translocase protein TatB (171 aa).

Residues 2 to 22 traverse the membrane as a helical segment; the sequence is FDGIGFMELLLIGVLGLVVLG. A disordered region spans residues 69 to 171; it reads SKGLSNLSPE…DTRSNPKANG (103 aa). Residues 88–97 show a composition bias toward polar residues; that stretch reads QAAQSVNRPY. Low complexity-rich tracts occupy residues 114–130 and 138–158; these read HSPV…HTSP and PTAT…SEPS. Residues 160–171 show a composition bias toward polar residues; sequence GADTRSNPKANG.

The protein belongs to the TatB family. As to quaternary structure, the Tat system comprises two distinct complexes: a TatABC complex, containing multiple copies of TatA, TatB and TatC subunits, and a separate TatA complex, containing only TatA subunits. Substrates initially bind to the TatABC complex, which probably triggers association of the separate TatA complex to form the active translocon.

The protein localises to the cell inner membrane. Functionally, part of the twin-arginine translocation (Tat) system that transports large folded proteins containing a characteristic twin-arginine motif in their signal peptide across membranes. Together with TatC, TatB is part of a receptor directly interacting with Tat signal peptides. TatB may form an oligomeric binding site that transiently accommodates folded Tat precursor proteins before their translocation. The sequence is that of Sec-independent protein translocase protein TatB from Shewanella baltica (strain OS185).